A 203-amino-acid chain; its full sequence is Protein-methionine-sulfoxide reductase heme-binding subunit MsrQ (203 aa).

Transmembrane regions (helical) follow at residues 10 to 30, 37 to 57, 75 to 95, 110 to 130, 147 to 167, and 169 to 189; these read IFVL…MGLL, IMMD…LSMT, LGLW…VFIL, PYII…VTSN, LVYV…RSDL, and EWAI…PPVW.

This sequence belongs to the MsrQ family. Heterodimer of a catalytic subunit (MsrP) and a heme-binding subunit (MsrQ). FMN is required as a cofactor. It depends on heme b as a cofactor.

The protein resides in the cell inner membrane. Functionally, part of the MsrPQ system that repairs oxidized periplasmic proteins containing methionine sulfoxide residues (Met-O), using respiratory chain electrons. Thus protects these proteins from oxidative-stress damage caused by reactive species of oxygen and chlorine generated by the host defense mechanisms. MsrPQ is essential for the maintenance of envelope integrity under bleach stress, rescuing a wide series of structurally unrelated periplasmic proteins from methionine oxidation. MsrQ provides electrons for reduction to the reductase catalytic subunit MsrP, using the quinone pool of the respiratory chain. The chain is Protein-methionine-sulfoxide reductase heme-binding subunit MsrQ from Pseudomonas entomophila (strain L48).